Consider the following 119-residue polypeptide: DNA-binding protein Maeo_0998 (119 aa).

The span at 1 to 11 (MDIEEIKRQKM) shows a compositional bias: basic and acidic residues. Residues 1–36 (MDIEEIKRQKMMELQQQQAQGAPNPEEIQQQQEQER) are disordered. A compositionally biased stretch (low complexity) spans 15–32 (QQQQAQGAPNPEEIQQQQ).

The protein belongs to the PDCD5 family.

The sequence is that of DNA-binding protein Maeo_0998 from Methanococcus aeolicus (strain ATCC BAA-1280 / DSM 17508 / OCM 812 / Nankai-3).